The sequence spans 231 residues: 2-hydroxy-3-keto-5-methylthiopentenyl-1-phosphate phosphatase (231 aa).

This sequence belongs to the HAD-like hydrolase superfamily. MtnX family.

The catalysed reaction is 2-hydroxy-5-methylsulfanyl-3-oxopent-1-enyl phosphate + H2O = 1,2-dihydroxy-5-(methylsulfanyl)pent-1-en-3-one + phosphate. The protein operates within amino-acid biosynthesis; L-methionine biosynthesis via salvage pathway; L-methionine from S-methyl-5-thio-alpha-D-ribose 1-phosphate: step 4/6. In terms of biological role, dephosphorylates 2-hydroxy-3-keto-5-methylthiopentenyl-1-phosphate (HK-MTPenyl-1-P) yielding 1,2-dihydroxy-3-keto-5-methylthiopentene (DHK-MTPene). The sequence is that of 2-hydroxy-3-keto-5-methylthiopentenyl-1-phosphate phosphatase from Bacillus pumilus (strain SAFR-032).